We begin with the raw amino-acid sequence, 318 residues long: Serpentine receptor class delta-25 (318 aa).

A run of 7 helical transmembrane segments spans residues 5 to 25 (LLHS…MYLA), 38 to 58 (VVIT…FFVM), 88 to 108 (HMFM…SYLF), 126 to 146 (IAFY…SIYI), 176 to 196 (ITLL…YTFI), 226 to 246 (TFKL…VAMF), and 258 to 278 (IVSV…IIFV).

It belongs to the nematode receptor-like protein srd family.

Its subcellular location is the membrane. This is Serpentine receptor class delta-25 (srd-25) from Caenorhabditis elegans.